Consider the following 321-residue polypeptide: MLVMLTSTLILVLMVLLAVAFLTMVERKTLGYMQLRKGPNVVGFMGLLQPIADGVKLFLKEPVWPTAASPALFIAAPIMALTLALSLWMFIPMPQSISTINLTLLVILAISSLSVYASLGSGWASNSKYALIGALRAVAQTISYEVSLGLILLCLIILTGGFSLQAFIYTQEHTWFLLSSWPLAAMWFVSTLAETNRTPFDLTEGESELVSGFNVEYAGGPFALFFLAEYSNILFMNTLTAIMFLGPLGPNNLNILPIINVMMKATPLIILFLWIRASYPRFRYDQLMHLMWKNFLPLNLALFTLQLSLAVSLGGAGVPQM.

Helical transmembrane passes span 2 to 22 (LVML…VAFL), 71 to 91 (ALFI…WMFI), 104 to 124 (LLVI…SGWA), 148 to 168 (LGLI…QAFI), 173 to 193 (HTWF…STLA), 224 to 244 (LFFL…AIMF), 255 to 275 (ILPI…FLWI), and 295 to 315 (FLPL…SLGG).

This sequence belongs to the complex I subunit 1 family.

The protein resides in the mitochondrion inner membrane. The enzyme catalyses a ubiquinone + NADH + 5 H(+)(in) = a ubiquinol + NAD(+) + 4 H(+)(out). Core subunit of the mitochondrial membrane respiratory chain NADH dehydrogenase (Complex I) that is believed to belong to the minimal assembly required for catalysis. Complex I functions in the transfer of electrons from NADH to the respiratory chain. The immediate electron acceptor for the enzyme is believed to be ubiquinone. The sequence is that of NADH-ubiquinone oxidoreductase chain 1 (MT-ND1) from Lampetra fluviatilis (European river lamprey).